The following is a 176-amino-acid chain: Lipoprotein signal peptidase (176 aa).

The next 4 membrane-spanning stretches (helical) occupy residues 11-31 (AFVA…LDQL), 38-58 (ATMQ…VLVF), 76-96 (WFFT…MHQH), and 101-121 (LLPA…VDRL). Catalysis depends on residues aspartate 128 and aspartate 146. Residues 139–159 (WPAFNLADSAITLGVGLMLWA) form a helical membrane-spanning segment.

This sequence belongs to the peptidase A8 family.

It is found in the cell inner membrane. The catalysed reaction is Release of signal peptides from bacterial membrane prolipoproteins. Hydrolyzes -Xaa-Yaa-Zaa-|-(S,diacylglyceryl)Cys-, in which Xaa is hydrophobic (preferably Leu), and Yaa (Ala or Ser) and Zaa (Gly or Ala) have small, neutral side chains.. Its pathway is protein modification; lipoprotein biosynthesis (signal peptide cleavage). This protein specifically catalyzes the removal of signal peptides from prolipoproteins. This is Lipoprotein signal peptidase from Azoarcus sp. (strain BH72).